The following is a 96-amino-acid chain: Co-chaperonin GroES (96 aa).

Belongs to the GroES chaperonin family. In terms of assembly, heptamer of 7 subunits arranged in a ring. Interacts with the chaperonin GroEL.

The protein resides in the cytoplasm. Functionally, together with the chaperonin GroEL, plays an essential role in assisting protein folding. The GroEL-GroES system forms a nano-cage that allows encapsulation of the non-native substrate proteins and provides a physical environment optimized to promote and accelerate protein folding. GroES binds to the apical surface of the GroEL ring, thereby capping the opening of the GroEL channel. The sequence is that of Co-chaperonin GroES from Legionella micdadei (Tatlockia micdadei).